We begin with the raw amino-acid sequence, 265 residues long: 4-hydroxy-tetrahydrodipicolinate reductase (265 aa).

NAD(+) is bound by residues 7 to 12 (GASGRM), aspartate 33, 96 to 98 (GTT), and 120 to 123 (AANF). The active-site Proton donor/acceptor is the histidine 153. (S)-2,3,4,5-tetrahydrodipicolinate is bound at residue histidine 154. The active-site Proton donor is lysine 157. Residue 163-164 (GT) participates in (S)-2,3,4,5-tetrahydrodipicolinate binding.

Belongs to the DapB family.

The protein localises to the cytoplasm. It catalyses the reaction (S)-2,3,4,5-tetrahydrodipicolinate + NAD(+) + H2O = (2S,4S)-4-hydroxy-2,3,4,5-tetrahydrodipicolinate + NADH + H(+). It carries out the reaction (S)-2,3,4,5-tetrahydrodipicolinate + NADP(+) + H2O = (2S,4S)-4-hydroxy-2,3,4,5-tetrahydrodipicolinate + NADPH + H(+). It participates in amino-acid biosynthesis; L-lysine biosynthesis via DAP pathway; (S)-tetrahydrodipicolinate from L-aspartate: step 4/4. Its function is as follows. Catalyzes the conversion of 4-hydroxy-tetrahydrodipicolinate (HTPA) to tetrahydrodipicolinate. This is 4-hydroxy-tetrahydrodipicolinate reductase from Cupriavidus taiwanensis (strain DSM 17343 / BCRC 17206 / CCUG 44338 / CIP 107171 / LMG 19424 / R1) (Ralstonia taiwanensis (strain LMG 19424)).